We begin with the raw amino-acid sequence, 670 residues long: Solute carrier organic anion transporter family member 1A5 (670 aa).

The Cytoplasmic segment spans residues 1–20; it reads MGETEKRVATHEVRCFSKIK. A helical membrane pass occupies residues 21–40; it reads MFLLALTWAYVSKSLSGIYM. The Extracellular segment spans residues 41–59; sequence NTMLTQIERQFDIPTSIVG. A helical transmembrane segment spans residues 60–80; sequence FINGSFEIGNLLLIIFVSYFG. Residues 81-86 lie on the Cytoplasmic side of the membrane; it reads TKLHRP. The helical transmembrane segment at 87-111 threads the bilayer; it reads IMIGVGCVIMGLGCFLMSLPHFLMG. At 112–155 the chain is on the extracellular side; it reads RYEYETTISPTSNLSSNSFLCMENRSQTLKPTQDPAECIKEMKS. 2 N-linked (GlcNAc...) asparagine glycosylation sites follow: Asn-124 and Asn-135. A helical membrane pass occupies residues 156–184; sequence LMWIYVLVGNIIRGIGETPIMPLGISYIE. The Cytoplasmic portion of the chain corresponds to 185-203; sequence DFAKSENSPLYIGILETGK. The chain crosses the membrane as a helical span at residues 204 to 224; the sequence is VFGPIVGLLLGSFCASIYVDT. The Extracellular segment spans residues 225–242; it reads GSVNTDDLTITPTDTRWV. The chain crosses the membrane as a helical span at residues 243 to 267; that stretch reads GAWWIGFLICAGVNILSSIPFFFFP. Topologically, residues 268-311 are cytoplasmic; the sequence is KTLPKEGLQDDVDGTNNDKEEKHREKAKEENRGITKDFLPFMKS. The chain crosses the membrane as a helical span at residues 312-333; the sequence is LSCNPIYMLLILTSVLQINAFI. Residues 334 to 353 are Extracellular-facing; the sequence is NMFTFLPKYLEQQYGKSTAE. Residues 354–377 traverse the membrane as a helical segment; the sequence is VVLLIGVYNLPPICIGYLLIGFIM. Residues 378–381 are Cytoplasmic-facing; that stretch reads KKFK. The chain crosses the membrane as a helical span at residues 382–405; sequence ITVKKAAYMAFCLSLFEYLLYFLH. Topologically, residues 406-513 are extracellular; the sequence is FMITCDNFPV…PECANKLQYF (108 aa). The Kazal-like domain occupies 433 to 488; it reads NKVLADCNRGCSCSTNSWDPVCGDNGLAYMSACLAGCKKSVGTGTNMVFQNCSCIR. Disulfide bonds link Cys-439–Cys-469, Cys-445–Cys-465, and Cys-454–Cys-486. 2 N-linked (GlcNAc...) asparagine glycosylation sites follow: Asn-483 and Asn-492. The chain crosses the membrane as a helical span at residues 514–536; it reads LIMSVIGSFIYSITAIPGYMVLL. Residues 537 to 545 lie on the Cytoplasmic side of the membrane; that stretch reads RCIKPEEKS. The chain crosses the membrane as a helical span at residues 546-571; the sequence is LGIGLHAFCTRVFAGIPAPIYFGALI. The Extracellular segment spans residues 572–605; it reads DRTCLHWGTLKCGEPGACRMYNINNFRRIYLVLP. Residues 606–623 traverse the membrane as a helical segment; sequence AALRGSSYLPALFILILM. The Cytoplasmic segment spans residues 624–670; it reads RKFQFPGEIDSSETELAEMKITVKKSECTDVHGSPQVENDGELKTRL.

It belongs to the organo anion transporter (TC 2.A.60) family. Highly expressed in the kidney, moderately abundant in the retina, and even lower in the liver. Expressed (at protein level) in the small intestine. Expressed at lower levels in brain,lung, and retina.

It is found in the cell membrane. Its subcellular location is the basal cell membrane. The enzyme catalyses taurocholate(out) = taurocholate(in). The catalysed reaction is glycocholate(out) = glycocholate(in). It carries out the reaction taurochenodeoxycholate(out) = taurochenodeoxycholate(in). It catalyses the reaction tauroursodeoxycholate(out) = tauroursodeoxycholate(in). The enzyme catalyses 3,3',5'-triiodo-L-thyronine(out) = 3,3',5'-triiodo-L-thyronine(in). The catalysed reaction is L-thyroxine(out) = L-thyroxine(in). It carries out the reaction taurodeoxycholate(out) = taurodeoxycholate(in). It catalyses the reaction glycodeoxycholate(out) = glycodeoxycholate(in). The enzyme catalyses glycochenodeoxycholate(out) = glycochenodeoxycholate(in). The catalysed reaction is glycoursodeoxycholate(out) = glycoursodeoxycholate(in). It carries out the reaction estrone 3-sulfate(out) = estrone 3-sulfate(in). It catalyses the reaction prostaglandin E2(out) = prostaglandin E2(in). The enzyme catalyses substance P(out) = substance P(in). In terms of biological role, na(+)-independent transporter that mediates the cellular uptake of a broad range of organic anions such as the endogenous bile salts cholate and deoxycholate, either in their unconjugated or conjugated forms (taurocholate and glycocholate), estrone 3-sulfate and prostaglandin E2, at the plasma membrane. Responsible for intestinal absorption of bile acids. Capable of thyroid hormone transport (both T3 or 3,3',5'-triiodo-L-thyronine, and T4 or L-tyroxine). Plays roles in blood-brain and -cerebrospinal fluid barrier transport of organic anions and signal mediators, and in hormone uptake by neural cells. May also play a role in the reuptake of neuropeptides such as substance P/TAC1 and vasoactive intestinal peptide/VIP released from retinal neurons. Shows a pH-sensitive substrate specificity which may be ascribed to the protonation state of the binding site and leads to a stimulation of substrate transport in an acidic microenvironment. Hydrogencarbonate/HCO3(-) acts as the probable counteranion that exchanges for organic anions. May contribute to regulate the transport of organic compounds in testis across the blood-testis-barrier. The sequence is that of Solute carrier organic anion transporter family member 1A5 (Slco1a5) from Rattus norvegicus (Rat).